The chain runs to 368 residues: NAD(P)H-quinone oxidoreductase subunit 1, chloroplastic (368 aa).

6 helical membrane passes run 27–47 (FIWIAFSILILLLTITIGVLV), 97–117 (WLFNIGPAIVVIPVFLSYLVI), 130–150 (IGVFFWIAISSIVPLGLLMAG), 269–289 (SSLFVTILYLGGWHFSIPFLL), 308–328 (IIIGIIIVLIKSYLFSFIAIM), and 348–368 (FLLPIALGNLLLTASFQAFLL).

It belongs to the complex I subunit 1 family. As to quaternary structure, NDH is composed of at least 16 different subunits, 5 of which are encoded in the nucleus.

The protein localises to the plastid. It is found in the chloroplast thylakoid membrane. It catalyses the reaction a plastoquinone + NADH + (n+1) H(+)(in) = a plastoquinol + NAD(+) + n H(+)(out). It carries out the reaction a plastoquinone + NADPH + (n+1) H(+)(in) = a plastoquinol + NADP(+) + n H(+)(out). In terms of biological role, NDH shuttles electrons from NAD(P)H:plastoquinone, via FMN and iron-sulfur (Fe-S) centers, to quinones in the photosynthetic chain and possibly in a chloroplast respiratory chain. The immediate electron acceptor for the enzyme in this species is believed to be plastoquinone. Couples the redox reaction to proton translocation, and thus conserves the redox energy in a proton gradient. The protein is NAD(P)H-quinone oxidoreductase subunit 1, chloroplastic of Physcomitrium patens (Spreading-leaved earth moss).